Reading from the N-terminus, the 299-residue chain is Protease HtpX homolog (299 aa).

2 helical membrane passes run 14 to 34 and 39 to 59; these read WLLLLVFFLLLGLVGYGVGYL and GFGGMILALVIGFIYAVTMIF. Histidine 143 lines the Zn(2+) pocket. The active site involves glutamate 144. Histidine 147 contributes to the Zn(2+) binding site. 2 helical membrane passes run 153-173 and 198-218; these read IRISTIAVALASAITMLAVMA and IILLIISLIAIILAPLAATLV. Residue glutamate 227 participates in Zn(2+) binding.

The protein belongs to the peptidase M48B family. The cofactor is Zn(2+).

The protein resides in the cell membrane. This is Protease HtpX homolog from Streptococcus thermophilus (strain CNRZ 1066).